Here is an 82-residue protein sequence, read N- to C-terminus: Small ribosomal subunit protein eS27B (82 aa).

The segment at 37–59 adopts a C4-type zinc-finger fold; that stretch reads CPGCLNITTVFSHAQTAVTCESC.

It belongs to the eukaryotic ribosomal protein eS27 family. Component of the small ribosomal subunit (SSU). Mature yeast ribosomes consist of a small (40S) and a large (60S) subunit. The 40S small subunit contains 1 molecule of ribosomal RNA (18S rRNA) and 33 different proteins (encoded by 57 genes). The large 60S subunit contains 3 rRNA molecules (25S, 5.8S and 5S rRNA) and 46 different proteins (encoded by 81 genes). Zn(2+) is required as a cofactor. The N-terminus is not modified.

It localises to the cytoplasm. Component of the ribosome, a large ribonucleoprotein complex responsible for the synthesis of proteins in the cell. The small ribosomal subunit (SSU) binds messenger RNAs (mRNAs) and translates the encoded message by selecting cognate aminoacyl-transfer RNA (tRNA) molecules. The large subunit (LSU) contains the ribosomal catalytic site termed the peptidyl transferase center (PTC), which catalyzes the formation of peptide bonds, thereby polymerizing the amino acids delivered by tRNAs into a polypeptide chain. The nascent polypeptides leave the ribosome through a tunnel in the LSU and interact with protein factors that function in enzymatic processing, targeting, and the membrane insertion of nascent chains at the exit of the ribosomal tunnel. This is Small ribosomal subunit protein eS27B from Saccharomyces cerevisiae (strain ATCC 204508 / S288c) (Baker's yeast).